The sequence spans 195 residues: Holliday junction branch migration complex subunit RuvA (195 aa).

A domain I region spans residues 1–61 (MYEYLDGVVV…ENDQTLYGFK (61 aa)). The tract at residues 62–139 (KAEDKELFLN…AVENEVGTLF (78 aa)) is domain II. The tract at residues 139–143 (FDLST) is flexible linker. The tract at residues 144–195 (TSNQALDEALEALIALGYSEKEVKKLTKKLSEQTDRTTDQYISSGLKLLMKG) is domain III.

Belongs to the RuvA family. In terms of assembly, homotetramer. Forms an RuvA(8)-RuvB(12)-Holliday junction (HJ) complex. HJ DNA is sandwiched between 2 RuvA tetramers; dsDNA enters through RuvA and exits via RuvB. An RuvB hexamer assembles on each DNA strand where it exits the tetramer. Each RuvB hexamer is contacted by two RuvA subunits (via domain III) on 2 adjacent RuvB subunits; this complex drives branch migration. In the full resolvosome a probable DNA-RuvA(4)-RuvB(12)-RuvC(2) complex forms which resolves the HJ.

The protein localises to the cytoplasm. Functionally, the RuvA-RuvB-RuvC complex processes Holliday junction (HJ) DNA during genetic recombination and DNA repair, while the RuvA-RuvB complex plays an important role in the rescue of blocked DNA replication forks via replication fork reversal (RFR). RuvA specifically binds to HJ cruciform DNA, conferring on it an open structure. The RuvB hexamer acts as an ATP-dependent pump, pulling dsDNA into and through the RuvAB complex. HJ branch migration allows RuvC to scan DNA until it finds its consensus sequence, where it cleaves and resolves the cruciform DNA. This is Holliday junction branch migration complex subunit RuvA from Pediococcus pentosaceus (strain ATCC 25745 / CCUG 21536 / LMG 10740 / 183-1w).